We begin with the raw amino-acid sequence, 106 residues long: PAT complex subunit Asterix (106 aa).

Over residues 1-10 the composition is skewed to polar residues; the sequence is MSANSMSDPR. The tract at residues 1–29 is disordered; sequence MSANSMSDPRSPNKVLRYKPPPSECNPAL. Position 2 is an N-acetylserine (serine 2). At 2-32 the chain is on the cytoplasmic side; the sequence is SANSMSDPRSPNKVLRYKPPPSECNPALDDP. The chain crosses the membrane as a helical span at residues 33–51; that stretch reads TPDYMNLLGMIFSMCGLML. A topological domain (lumenal) is located at residue lysine 52. A helical transmembrane segment spans residues 53–70; the sequence is LKWCAWVAVYCSFISFAN. At 71–74 the chain is on the cytoplasmic side; sequence SRSS. The helical transmembrane segment at 75–95 threads the bilayer; that stretch reads EDTKQMMSSFMLSISAVVMSY. Topologically, residues 96–106 are lumenal; the sequence is LQNPQPMTPPW.

It belongs to the Asterix family. Component of the PAT complex, composed of WDR83OS/Asterix and CCDC47. The PAT complex is part of the multi-pass translocon (MPT) complex, composed of three subcomplexes, the GEL complex (composed of RAB5IF/OPTI and TMCO1), the BOS complex (composed of NCLN/Nicalin, NOMO1 and TMEM147) and the PAT complex (composed of WDR83OS/Asterix and CCDC47). The MPT complex associates with the SEC61 complex.

The protein resides in the endoplasmic reticulum membrane. In terms of biological role, component of the multi-pass translocon (MPT) complex that mediates insertion of multi-pass membrane proteins into the lipid bilayer of membranes. The MPT complex takes over after the SEC61 complex: following membrane insertion of the first few transmembrane segments of proteins by the SEC61 complex, the MPT complex occludes the lateral gate of the SEC61 complex to promote insertion of subsequent transmembrane regions. Within the MPT complex, the PAT subcomplex sequesters any highly polar regions in the transmembrane domains away from the non-polar membrane environment until they can be buried in the interior of the fully assembled protein. Within the PAT subcomplex, WDR83OS/Asterix binds to and redirects the substrate to a location behind the SEC61 complex. This is PAT complex subunit Asterix (WDR83OS) from Sus scrofa (Pig).